A 187-amino-acid chain; its full sequence is UPF0301 protein YqgE (187 aa).

Belongs to the UPF0301 (AlgH) family.

This is UPF0301 protein YqgE from Salmonella choleraesuis (strain SC-B67).